The following is a 306-amino-acid chain: Ribonuclease Z (306 aa).

7 residues coordinate Zn(2+): histidine 63, histidine 65, aspartate 67, histidine 68, histidine 141, aspartate 211, and histidine 269. Aspartate 67 acts as the Proton acceptor in catalysis.

This sequence belongs to the RNase Z family. Homodimer. Requires Zn(2+) as cofactor.

The enzyme catalyses Endonucleolytic cleavage of RNA, removing extra 3' nucleotides from tRNA precursor, generating 3' termini of tRNAs. A 3'-hydroxy group is left at the tRNA terminus and a 5'-phosphoryl group is left at the trailer molecule.. In terms of biological role, zinc phosphodiesterase, which displays some tRNA 3'-processing endonuclease activity. Probably involved in tRNA maturation, by removing a 3'-trailer from precursor tRNA. The polypeptide is Ribonuclease Z (Staphylococcus epidermidis (strain ATCC 12228 / FDA PCI 1200)).